Consider the following 696-residue polypeptide: Glutamate-rich protein 6B (696 aa).

Residues 1–10 show a composition bias toward polar residues; the sequence is MSAENNQLSG. The interval 1–105 is disordered; that stretch reads MSAENNQLSG…EYLEKAGYLE (105 aa). Composition is skewed to acidic residues over residues 32–44 and 54–72; these read EDTEVELDEESLQ and ESLEDKEYLEEEEDLEEEE. Basic and acidic residues predominate over residues 73–91; the sequence is YLGKEEYLKEEEYLGKEEH.

The protein belongs to the ERICH6 family.

This is Glutamate-rich protein 6B (ERICH6B) from Homo sapiens (Human).